Here is a 2197-residue protein sequence, read N- to C-terminus: Activating signal cointegrator 1 complex subunit 3 (2197 aa).

S12 is subject to Phosphoserine. Coiled-coil stretches lie at residues 18–80 (KQDN…AKQI) and 328–356 (IQSE…KAGE). The Helicase ATP-binding 1 domain occupies 487–670 (DTAYNTNENM…FLHVNPYIGL (184 aa)). Position 500–507 (500–507 (APTGAGKT)) interacts with ATP. N6-acetyllysine is present on K573. Residues 612–615 (DEVH) carry the DEVH box motif. The Helicase C-terminal 1 domain maps to 697 to 915 (QLNNMDEVCY…GTVTNVEEAV (219 aa)). The region spanning 979–1288 (STDLGRTASH…GAEAVCIINF (310 aa)) is the SEC63 1 domain. One can recognise a Helicase ATP-binding 2 domain in the interval 1337-1512 (HTLYHTDCNV…WLNIKQMGLF (176 aa)). 1350 to 1357 (APTGSGKT) is a binding site for ATP. The DEIH box signature appears at 1454–1457 (DEIH). The region spanning 1565 to 1739 (RMLSSMTKLE…VLSDHLNAEI (175 aa)) is the Helicase C-terminal 2 domain. The 364-residue stretch at 1812 to 2175 (PLTCGRIASY…YLGLDQQYDI (364 aa)) folds into the SEC63 2 domain.

Belongs to the helicase family. As to quaternary structure, identified in the ASCC complex that contains ASCC1, ASCC2 and ASCC3. Functions as a scaffolding subunit that interacts directly with both ASCC1 and ASCC2. Interacts directly with ALKBH3, and thereby recruits ALKBH3 to the ASCC complex. Part of the ASC-1/TRIP4 complex, that contains TRIP4, ASCC1, ASCC2 and ASCC3. Part of the RQT (ribosome quality control trigger) complex, that contains ASCC2, ASCC3 and TRIP4. Associates with ribosomes; recruited to collided ribosomes. Interacts with ZCCHC4. Interacts with ZNF598. Interacts with RPS3.

Its subcellular location is the nucleus. The protein localises to the nucleus speckle. It localises to the cytoplasm. It is found in the cytosol. The enzyme catalyses Couples ATP hydrolysis with the unwinding of duplex DNA by translocating in the 3'-5' direction.. It catalyses the reaction ATP + H2O = ADP + phosphate + H(+). In terms of biological role, ATPase involved both in DNA repair and rescue of stalled ribosomes. 3'-5' DNA helicase involved in repair of alkylated DNA: promotes DNA unwinding to generate single-stranded substrate needed for ALKBH3, enabling ALKBH3 to process alkylated N3-methylcytosine (3mC) within double-stranded regions. Also involved in activation of the ribosome quality control (RQC) pathway, a pathway that degrades nascent peptide chains during problematic translation. Drives the splitting of stalled ribosomes that are ubiquitinated in a ZNF598-dependent manner, as part of the ribosome quality control trigger (RQT) complex. Part of the ASC-1 complex that enhances NF-kappa-B, SRF and AP1 transactivation. The protein is Activating signal cointegrator 1 complex subunit 3 (Ascc3) of Rattus norvegicus (Rat).